The sequence spans 90 residues: MANSAQARKRARQAAKANSHNSALRSKFRTAIKAVRKAVDAGDQAKAAELFKAAVKTIDTIADKKIVHKNKAARSKSRLAAAVKGLQAAA.

A disordered region spans residues 1 to 25 (MANSAQARKRARQAAKANSHNSALR).

It belongs to the bacterial ribosomal protein bS20 family.

In terms of biological role, binds directly to 16S ribosomal RNA. This Burkholderia multivorans (strain ATCC 17616 / 249) protein is Small ribosomal subunit protein bS20.